The following is a 300-amino-acid chain: Probable endonuclease 4 (300 aa).

Zn(2+) contacts are provided by histidine 68, histidine 109, glutamate 144, aspartate 178, histidine 181, histidine 213, aspartate 226, histidine 228, and glutamate 258.

This sequence belongs to the AP endonuclease 2 family. Zn(2+) serves as cofactor.

The enzyme catalyses Endonucleolytic cleavage to 5'-phosphooligonucleotide end-products.. Functionally, endonuclease IV plays a role in DNA repair. It cleaves phosphodiester bonds at apurinic or apyrimidinic (AP) sites, generating a 3'-hydroxyl group and a 5'-terminal sugar phosphate. This is Probable endonuclease 4 from Latilactobacillus sakei subsp. sakei (strain 23K) (Lactobacillus sakei subsp. sakei).